The chain runs to 114 residues: Superoxide dismutase [Cu-Zn] (114 aa).

H37, H39, and H54 together coordinate Cu cation. The Zn(2+) site is built by H54, H62, H71, and D74. A disordered region spans residues 54-80; the sequence is HFNPGNKEHGAPTDGNRHLGDLGNIQA. Residues 59 to 73 show a composition bias toward basic and acidic residues; it reads NKEHGAPTDGNRHLG. H111 serves as a coordination point for Cu cation.

The protein belongs to the Cu-Zn superoxide dismutase family. As to quaternary structure, homodimer. Cu cation serves as cofactor. The cofactor is Zn(2+).

The protein resides in the cytoplasm. The catalysed reaction is 2 superoxide + 2 H(+) = H2O2 + O2. Destroys radicals which are normally produced within the cells and which are toxic to biological systems. The chain is Superoxide dismutase [Cu-Zn] from Drosophila tolteca (Fruit fly).